The following is a 318-amino-acid chain: Decaprenyl-phosphate phosphoribosyltransferase (318 aa).

The next 2 helical transmembrane spans lie at 33–53 (WIKN…GIEY) and 59–79 (AAKV…IYLI). The 5-phospho-alpha-D-ribose 1-diphosphate site is built by Lys35 and Tyr77. The Mg(2+) site is built by Asn80 and Asp84. Lys94 provides a ligand contact to 5-phospho-alpha-D-ribose 1-diphosphate. A run of 2 helical transmembrane segments spans residues 99 to 119 (IAAG…LAVA) and 121 to 141 (LVIS…YIAV). 5-phospho-alpha-D-ribose 1-diphosphate is bound by residues Lys150 and Arg167. The next 2 membrane-spanning stretches (helical) occupy residues 153–173 (AVLD…AGGV) and 177–197 (IPLS…MAAG). Residue Lys198 coordinates trans,octa-cis-decaprenyl phosphate. Transmembrane regions (helical) follow at residues 225–245 (LRFV…LWAF), 262–282 (SWYA…AVDI), and 298–318 (RVLQ…IYFS).

This sequence belongs to the UbiA prenyltransferase family. DPPR synthase subfamily. The cofactor is Mg(2+).

The protein localises to the cell inner membrane. The enzyme catalyses trans,octa-cis-decaprenyl phosphate + 5-phospho-alpha-D-ribose 1-diphosphate + H(+) = trans,octa-cis-decaprenylphospho-beta-D-ribofuranose 5-phosphate + diphosphate. The protein operates within cell wall biogenesis; cell wall polysaccharide biosynthesis. Functionally, involved in the biosynthesis of decaprenylphosphoryl arabinose (DPA) a precursor for arabinan synthesis in mycobacterial cell wall biosynthesis. Catalyzes the transfer of a 5-phosphoribosyl residue from phosphoribose diphosphate (PRPP) to decaprenyl phosphate (DP) to form decaprenylphosphoryl-5-phosphoribose (DPPR). The protein is Decaprenyl-phosphate phosphoribosyltransferase of Mycolicibacterium smegmatis (strain ATCC 700084 / mc(2)155) (Mycobacterium smegmatis).